The primary structure comprises 176 residues: RNA pyrophosphohydrolase (176 aa).

Residues 6-149 form the Nudix hydrolase domain; that stretch reads GYRPNVGIIL…KRQVYQQALF (144 aa). Residues 38–59 carry the Nudix box motif; the sequence is GGIKHGESPEQAMFRELFEEVG.

This sequence belongs to the Nudix hydrolase family. RppH subfamily. A divalent metal cation serves as cofactor.

Functionally, accelerates the degradation of transcripts by removing pyrophosphate from the 5'-end of triphosphorylated RNA, leading to a more labile monophosphorylated state that can stimulate subsequent ribonuclease cleavage. This is RNA pyrophosphohydrolase from Aromatoleum aromaticum (strain DSM 19018 / LMG 30748 / EbN1) (Azoarcus sp. (strain EbN1)).